A 497-amino-acid polypeptide reads, in one-letter code: Probable malate:quinone oxidoreductase (497 aa).

Belongs to the MQO family. FAD is required as a cofactor.

The enzyme catalyses (S)-malate + a quinone = a quinol + oxaloacetate. It functions in the pathway carbohydrate metabolism; tricarboxylic acid cycle; oxaloacetate from (S)-malate (quinone route): step 1/1. In Bacillus cereus (strain ATCC 14579 / DSM 31 / CCUG 7414 / JCM 2152 / NBRC 15305 / NCIMB 9373 / NCTC 2599 / NRRL B-3711), this protein is Probable malate:quinone oxidoreductase.